The following is a 520-amino-acid chain: GMP synthase [glutamine-hydrolyzing] (520 aa).

Residues 12–205 (KIIVLDYGSQ…AISICGARGD (194 aa)) form the Glutamine amidotransferase type-1 domain. C89 serves as the catalytic Nucleophile. Catalysis depends on residues H179 and E181. Residues 206–395 (WSMDNFIDME…LGMPEEIVWR (190 aa)) enclose the GMPS ATP-PPase domain. 233–239 (SGGVDSS) serves as a coordination point for ATP.

As to quaternary structure, homodimer.

It carries out the reaction XMP + L-glutamine + ATP + H2O = GMP + L-glutamate + AMP + diphosphate + 2 H(+). Its pathway is purine metabolism; GMP biosynthesis; GMP from XMP (L-Gln route): step 1/1. Its function is as follows. Catalyzes the synthesis of GMP from XMP. This Streptococcus pyogenes serotype M3 (strain SSI-1) protein is GMP synthase [glutamine-hydrolyzing].